A 115-amino-acid polypeptide reads, in one-letter code: NADH-ubiquinone oxidoreductase chain 3 (115 aa).

Helical transmembrane passes span 3–23, 55–75, and 86–106; these read LVMA…IAFW, FFLV…LLPL, and TMLI…AYEW.

This sequence belongs to the complex I subunit 3 family. As to quaternary structure, core subunit of respiratory chain NADH dehydrogenase (Complex I) which is composed of 45 different subunits. Interacts with TMEM186. Interacts with TMEM242.

It localises to the mitochondrion inner membrane. The enzyme catalyses a ubiquinone + NADH + 5 H(+)(in) = a ubiquinol + NAD(+) + 4 H(+)(out). In terms of biological role, core subunit of the mitochondrial membrane respiratory chain NADH dehydrogenase (Complex I) which catalyzes electron transfer from NADH through the respiratory chain, using ubiquinone as an electron acceptor. Essential for the catalytic activity of complex I. The sequence is that of NADH-ubiquinone oxidoreductase chain 3 from Hippopotamus amphibius (Hippopotamus).